We begin with the raw amino-acid sequence, 211 residues long: NADH-quinone oxidoreductase subunit I (211 aa).

2 consecutive 4Fe-4S ferredoxin-type domains span residues Arg-90–Lys-119 and Thr-129–Glu-158. [4Fe-4S] cluster contacts are provided by Cys-99, Cys-102, Cys-105, Cys-109, Cys-138, Cys-141, Cys-144, and Cys-148.

It belongs to the complex I 23 kDa subunit family. In terms of assembly, NDH-1 is composed of 14 different subunits. Subunits NuoA, H, J, K, L, M, N constitute the membrane sector of the complex. It depends on [4Fe-4S] cluster as a cofactor.

It localises to the cell inner membrane. It carries out the reaction a quinone + NADH + 5 H(+)(in) = a quinol + NAD(+) + 4 H(+)(out). Functionally, NDH-1 shuttles electrons from NADH, via FMN and iron-sulfur (Fe-S) centers, to quinones in the respiratory chain. The immediate electron acceptor for the enzyme in this species is believed to be ubiquinone. Couples the redox reaction to proton translocation (for every two electrons transferred, four hydrogen ions are translocated across the cytoplasmic membrane), and thus conserves the redox energy in a proton gradient. The polypeptide is NADH-quinone oxidoreductase subunit I (Sulfurimonas denitrificans (strain ATCC 33889 / DSM 1251) (Thiomicrospira denitrificans (strain ATCC 33889 / DSM 1251))).